The chain runs to 290 residues: Nitrogenase iron protein 2 (290 aa).

10 to 17 lines the ATP pocket; that stretch reads GKGGIGKS. Cys-98 contributes to the [4Fe-4S] cluster binding site. Arg-101 is subject to ADP-ribosylarginine; by dinitrogenase reductase ADP-ribosyltransferase. Cys-133 provides a ligand contact to [4Fe-4S] cluster.

The protein belongs to the NifH/BchL/ChlL family. As to quaternary structure, homodimer. [4Fe-4S] cluster serves as cofactor. The reversible ADP-ribosylation of Arg-101 inactivates the nitrogenase reductase and regulates nitrogenase activity.

It catalyses the reaction N2 + 8 reduced [2Fe-2S]-[ferredoxin] + 16 ATP + 16 H2O = H2 + 8 oxidized [2Fe-2S]-[ferredoxin] + 2 NH4(+) + 16 ADP + 16 phosphate + 6 H(+). Functionally, the key enzymatic reactions in nitrogen fixation are catalyzed by the nitrogenase complex, which has 2 components: the iron protein (component 2) and a component 1 which is either a molybdenum-iron protein, a vanadium-iron, or an iron-iron protein. This chain is Nitrogenase iron protein 2 (vnfH), found in Azotobacter vinelandii.